The chain runs to 99 residues: Malonate decarboxylase acyl carrier protein (99 aa).

Serine 25 carries the post-translational modification O-(phosphoribosyl dephospho-coenzyme A)serine.

This sequence belongs to the MdcC family. In terms of processing, covalently binds the prosthetic group of malonate decarboxylase.

It is found in the cytoplasm. In terms of biological role, subunit of malonate decarboxylase, it is an acyl carrier protein to which acetyl and malonyl thioester residues are bound via a 2'-(5''-phosphoribosyl)-3'-dephospho-CoA prosthetic group and turn over during the catalytic mechanism. This Pseudomonas aeruginosa (strain UCBPP-PA14) protein is Malonate decarboxylase acyl carrier protein.